Reading from the N-terminus, the 148-residue chain is Snaclec stejaggregin-A subunit beta-3 (148 aa).

The first 23 residues, 1–23, serve as a signal peptide directing secretion; it reads MGRFISVSFGLLVVFLSLSGAGA. A disulfide bridge links Cys27 with Cys38. The 112-residue stretch at 34-145 folds into the C-type lectin domain; the sequence is YDLYCYKVFK…CSRTHYVVCK (112 aa). 2 N-linked (GlcNAc...) asparagine glycosylation sites follow: Asn47 and Asn78. Intrachain disulfides connect Cys55–Cys144 and Cys121–Cys136.

Belongs to the snaclec family. Heteromultimer; disulfide-linked. In terms of tissue distribution, expressed by the venom gland.

The protein localises to the secreted. Functionally, interferes with one step of hemostasis (modulation of platelet aggregation, or coagulation cascade, for example). This is Snaclec stejaggregin-A subunit beta-3 from Trimeresurus stejnegeri (Chinese green tree viper).